Reading from the N-terminus, the 746-residue chain is NAD(P)H-quinone oxidoreductase subunit 5, chloroplastic (746 aa).

Helical transmembrane passes span 9–29 (WIIP…LLLF), 39–59 (IWTF…LYLS), 89–109 (IDPL…LVLI), 125–145 (FAYM…SNLI), 147–167 (VYFF…FWFT), 185–205 (GDFG…SFEF), 221–241 (VNFF…IAKS), 258–278 (TPIS…FLVA), 280–300 (LLPL…IGII), 327–347 (LGYM…FHLI), 354–374 (ALLF…VGYS), 396–416 (TAFL…CFWS), 425–445 (LLFS…TAFY), 547–567 (ILFP…IGIP), 608–628 (FSVS…KPFY), and 723–743 (YLFF…FFYF).

The protein belongs to the complex I subunit 5 family. As to quaternary structure, NDH is composed of at least 16 different subunits, 5 of which are encoded in the nucleus.

It is found in the plastid. It localises to the chloroplast thylakoid membrane. The enzyme catalyses a plastoquinone + NADH + (n+1) H(+)(in) = a plastoquinol + NAD(+) + n H(+)(out). It carries out the reaction a plastoquinone + NADPH + (n+1) H(+)(in) = a plastoquinol + NADP(+) + n H(+)(out). Its function is as follows. NDH shuttles electrons from NAD(P)H:plastoquinone, via FMN and iron-sulfur (Fe-S) centers, to quinones in the photosynthetic chain and possibly in a chloroplast respiratory chain. The immediate electron acceptor for the enzyme in this species is believed to be plastoquinone. Couples the redox reaction to proton translocation, and thus conserves the redox energy in a proton gradient. The sequence is that of NAD(P)H-quinone oxidoreductase subunit 5, chloroplastic (ndhF) from Capsella bursa-pastoris (Shepherd's purse).